Consider the following 367-residue polypeptide: Protein-glutamate methylesterase/protein-glutamine glutaminase 2 (367 aa).

One can recognise a Response regulatory domain in the interval 15 to 132 (RALIVDDSAL…SQSMHEMAEE (118 aa)). At D66 the chain carries 4-aspartylphosphate. One can recognise a CheB-type methylesterase domain in the interval 172-367 (KTSVRNVLAI…MADEIVKIVR (196 aa)). Residues S184, H211, and D311 contribute to the active site.

It belongs to the CheB family. Phosphorylated by CheA. Phosphorylation of the N-terminal regulatory domain activates the methylesterase activity.

It localises to the cytoplasm. It carries out the reaction [protein]-L-glutamate 5-O-methyl ester + H2O = L-glutamyl-[protein] + methanol + H(+). It catalyses the reaction L-glutaminyl-[protein] + H2O = L-glutamyl-[protein] + NH4(+). In terms of biological role, involved in chemotaxis. Part of a chemotaxis signal transduction system that modulates chemotaxis in response to various stimuli. Catalyzes the demethylation of specific methylglutamate residues introduced into the chemoreceptors (methyl-accepting chemotaxis proteins or MCP) by CheR. Also mediates the irreversible deamidation of specific glutamine residues to glutamic acid. This is Protein-glutamate methylesterase/protein-glutamine glutaminase 2 from Methanosarcina mazei (strain ATCC BAA-159 / DSM 3647 / Goe1 / Go1 / JCM 11833 / OCM 88) (Methanosarcina frisia).